The primary structure comprises 586 residues: DNA-binding protein RFX8 (586 aa).

The RFX-type winged-helix DNA-binding region spans 22–97 (VIQWLVDNFC…YHYDGICIKK (76 aa)).

Belongs to the RFX family.

It localises to the nucleus. Functionally, may be a transcription factor. This Homo sapiens (Human) protein is DNA-binding protein RFX8 (RFX8).